Reading from the N-terminus, the 507-residue chain is 2,3-bisphosphoglycerate-independent phosphoglycerate mutase (507 aa).

Asp-11 and Ser-61 together coordinate Mn(2+). Ser-61 (phosphoserine intermediate) is an active-site residue. Residues His-122, 152-153, Arg-183, Arg-189, 258-261, and Lys-332 contribute to the substrate site; these read RD and RNDR. Positions 399, 403, 440, 441, and 458 each coordinate Mn(2+).

This sequence belongs to the BPG-independent phosphoglycerate mutase family. As to quaternary structure, monomer. Requires Mn(2+) as cofactor.

It carries out the reaction (2R)-2-phosphoglycerate = (2R)-3-phosphoglycerate. Its pathway is carbohydrate degradation; glycolysis; pyruvate from D-glyceraldehyde 3-phosphate: step 3/5. Functionally, catalyzes the interconversion of 2-phosphoglycerate and 3-phosphoglycerate. This Parabacteroides distasonis (strain ATCC 8503 / DSM 20701 / CIP 104284 / JCM 5825 / NCTC 11152) protein is 2,3-bisphosphoglycerate-independent phosphoglycerate mutase.